A 625-amino-acid chain; its full sequence is Basic helix-loop-helix ARNT-like protein 1 (625 aa).

Residues Met-1 to Arg-60 form a disordered region. A Phosphoserine; by GSK3-beta modification is found at Ser-17. The segment covering Ser-17–Gly-32 has biased composition (low complexity). Thr-21 is subject to Phosphothreonine; by GSK3-beta. A Nuclear localization signal motif is present at residues Asn-36–Gly-41. The segment covering Asp-51–Arg-60 has biased composition (basic and acidic residues). In terms of domain architecture, bHLH spans Asn-72–Leu-125. Ser-78 is subject to Phosphoserine. The residue at position 90 (Ser-90) is a Phosphoserine; by CK2. The short motif at Leu-142–Leu-152 is the Nuclear export signal 1 element. A PAS 1 domain is found at Ser-143–Pro-215. Lys-252 is covalently cross-linked (Glycyl lysine isopeptide (Lys-Gly) (interchain with G-Cter in SUMO2 and SUMO3)). Lys-259 is covalently cross-linked (Glycyl lysine isopeptide (Lys-Gly) (interchain with G-Cter in SUMO); alternate). Lys-259 is covalently cross-linked (Glycyl lysine isopeptide (Lys-Gly) (interchain with G-Cter in SUMO2); alternate). One can recognise a PAS 2 domain in the interval Pro-325–Arg-395. Residues Leu-360–Leu-368 carry the Nuclear export signal 2 motif. The 44-residue stretch at Thr-400–Asn-443 folds into the PAC domain. Disordered stretches follow at residues Gln-454–Ala-491 and Gly-510–Asn-594. Positions Arg-507–Gln-587 are interaction with CIART. Residues Gly-510 to Pro-520 are compositionally biased toward low complexity. Lys-537 carries the N6-acetyllysine modification.

In terms of assembly, component of the circadian clock oscillator which includes the CRY1/2 proteins, CLOCK or NPAS2, BMAL1 or BMAL2, CSNK1D and/or CSNK1E, TIMELESS and the PER1/2/3 proteins. Forms a heterodimer with CLOCK. The CLOCK-BMAL1 heterodimer is required for E-box-dependent transactivation, for CLOCK nuclear translocation and degradation, and, for phosphorylation of both CLOCK and BMAL1. Part of a nuclear complex which also includes RACK1 and PRKCA; RACK1 and PRKCA are recruited to the complex in a circadian manner. Interacts with NPAS2. Interacts with EZH2. Interacts with SUMO3. Interacts with SIRT1. Interacts with AHR. Interacts with ID1, ID2 and ID3. Interacts with DDX4. Interacts with OGT. Interacts with EED and SUZ12. Interacts with MTA1. Interacts with CIART. Interacts with HSP90. Interacts with KAT2B and EP300. Interacts with BHLHE40/DEC1 and BHLHE41/DEC2. Interacts with RELB and the interaction is enhanced in the presence of CLOCK. Interacts with PER1, PER2, CRY1 and CRY2 and this interaction requires a translocation to the nucleus. Interaction of the CLOCK-BMAL1 heterodimer with PER or CRY inhibits transcription activation. Interaction of the CLOCK-BMAL1 with CRY1 is independent of DNA but with PER2 is off DNA. The CLOCK-BMAL1 heterodimer interacts with GSK3B. Interacts with KDM5A. Interacts with KMT2A; in a circadian manner. Interacts with UBE3A. Interacts with PRKCG. Interacts with MAGEL2. Interacts with NCOA2. Interacts with THRAP3. The CLOCK-BMAL1 heterodimer interacts with PASD1. Interacts with PASD1. Interacts with USP9X. Interacts with PIWIL2 (via PIWI domain). Interacts with HDAC3. Interacts with HNF4A. In terms of processing, ubiquitinated, leading to its proteasomal degradation. Deubiquitinated by USP9X. Post-translationally, O-glycosylated; contains O-GlcNAc. O-glycosylation by OGT prevents protein degradation by inhibiting ubiquitination. It also stabilizes the CLOCK-BMAL1 heterodimer thereby increasing CLOCK-BMAL1-mediated transcription of genes in the negative loop of the circadian clock such as PER1/2/3 and CRY1/2. Acetylated on Lys-537 by CLOCK during the repression phase of the circadian cycle. Acetylation facilitates recruitment of CRY1 protein and initiates the repression phase of the circadian cycle. Acetylated at Lys-537 by KAT5 during the activation phase of the cycle, leading to recruitment of the positive transcription elongation factor b (P-TEFb) and BRD4, followed by productive elongation of circadian transcripts. Deacetylated by SIRT1, which may result in decreased protein stability. In terms of processing, phosphorylated upon dimerization with CLOCK. Phosphorylation enhances the transcriptional activity, alters the subcellular localization and decreases the stability of the CLOCK-BMAL1 heterodimer by promoting its degradation. Phosphorylation shows circadian variations in the liver with a peak between CT10 to CT14. Phosphorylation at Ser-90 by CK2 is essential for its nuclear localization, its interaction with CLOCK and controls CLOCK nuclear entry. Dephosphorylation at Ser-78 is important for dimerization with CLOCK and transcriptional activity. Post-translationally, sumoylated on Lys-259 upon dimerization with CLOCK. Predominantly conjugated to poly-SUMO2/3 rather than SUMO1 and the level of these conjugates undergo rhythmic variation, peaking at CT9-CT12. Sumoylation localizes it exclusively to the PML body and promotes its ubiquitination in the PML body, ubiquitin-dependent proteasomal degradation and the transcriptional activity of the CLOCK-BMAL1 heterodimer. Undergoes lysosome-mediated degradation in a time-dependent manner in the liver.

Its subcellular location is the nucleus. It localises to the cytoplasm. The protein localises to the PML body. Its function is as follows. Transcriptional activator which forms a core component of the circadian clock. The circadian clock, an internal time-keeping system, regulates various physiological processes through the generation of approximately 24 hour circadian rhythms in gene expression, which are translated into rhythms in metabolism and behavior. It is derived from the Latin roots 'circa' (about) and 'diem' (day) and acts as an important regulator of a wide array of physiological functions including metabolism, sleep, body temperature, blood pressure, endocrine, immune, cardiovascular, and renal function. Consists of two major components: the central clock, residing in the suprachiasmatic nucleus (SCN) of the brain, and the peripheral clocks that are present in nearly every tissue and organ system. Both the central and peripheral clocks can be reset by environmental cues, also known as Zeitgebers (German for 'timegivers'). The predominant Zeitgeber for the central clock is light, which is sensed by retina and signals directly to the SCN. The central clock entrains the peripheral clocks through neuronal and hormonal signals, body temperature and feeding-related cues, aligning all clocks with the external light/dark cycle. Circadian rhythms allow an organism to achieve temporal homeostasis with its environment at the molecular level by regulating gene expression to create a peak of protein expression once every 24 hours to control when a particular physiological process is most active with respect to the solar day. Transcription and translation of core clock components (CLOCK, NPAS2, BMAL1, BMAL2, PER1, PER2, PER3, CRY1 and CRY2) plays a critical role in rhythm generation, whereas delays imposed by post-translational modifications (PTMs) are important for determining the period (tau) of the rhythms (tau refers to the period of a rhythm and is the length, in time, of one complete cycle). A diurnal rhythm is synchronized with the day/night cycle, while the ultradian and infradian rhythms have a period shorter and longer than 24 hours, respectively. Disruptions in the circadian rhythms contribute to the pathology of cardiovascular diseases, cancer, metabolic syndromes and aging. A transcription/translation feedback loop (TTFL) forms the core of the molecular circadian clock mechanism. Transcription factors, CLOCK or NPAS2 and BMAL1 or BMAL2, form the positive limb of the feedback loop, act in the form of a heterodimer and activate the transcription of core clock genes and clock-controlled genes (involved in key metabolic processes), harboring E-box elements (5'-CACGTG-3') within their promoters. The core clock genes: PER1/2/3 and CRY1/2 which are transcriptional repressors form the negative limb of the feedback loop and interact with the CLOCK|NPAS2-BMAL1|BMAL2 heterodimer inhibiting its activity and thereby negatively regulating their own expression. This heterodimer also activates nuclear receptors NR1D1/2 and RORA/B/G, which form a second feedback loop and which activate and repress BMAL1 transcription, respectively. BMAL1 positively regulates myogenesis and negatively regulates adipogenesis via the transcriptional control of the genes of the canonical Wnt signaling pathway. Plays a role in normal pancreatic beta-cell function; regulates glucose-stimulated insulin secretion via the regulation of antioxidant genes NFE2L2/NRF2 and its targets SESN2, PRDX3, CCLC and CCLM. Negatively regulates the mTORC1 signaling pathway; regulates the expression of MTOR and DEPTOR. Controls diurnal oscillations of Ly6C inflammatory monocytes; rhythmic recruitment of the PRC2 complex imparts diurnal variation to chemokine expression that is necessary to sustain Ly6C monocyte rhythms. Regulates the expression of HSD3B2, STAR, PTGS2, CYP11A1, CYP19A1 and LHCGR in the ovary and also the genes involved in hair growth. Plays an important role in adult hippocampal neurogenesis by regulating the timely entry of neural stem/progenitor cells (NSPCs) into the cell cycle and the number of cell divisions that take place prior to cell-cycle exit. Regulates the circadian expression of CIART and KLF11. The CLOCK-BMAL1 heterodimer regulates the circadian expression of SERPINE1/PAI1, VWF, B3, CCRN4L/NOC, NAMPT, DBP, MYOD1, PPARGC1A, PPARGC1B, SIRT1, GYS2, F7, NGFR, GNRHR, BHLHE40/DEC1, ATF4, MTA1, KLF10 and also genes implicated in glucose and lipid metabolism. Promotes rhythmic chromatin opening, regulating the DNA accessibility of other transcription factors. The NPAS2-BMAL1 heterodimer positively regulates the expression of MAOA, F7 and LDHA and modulates the circadian rhythm of daytime contrast sensitivity by regulating the rhythmic expression of adenylate cyclase type 1 (ADCY1) in the retina. The preferred binding motif for the CLOCK-BMAL1 heterodimer is 5'-CACGTGA-3', which contains a flanking adenine nucleotide at the 3-prime end of the canonical 6-nucleotide E-box sequence. CLOCK specifically binds to the half-site 5'-CAC-3', while BMAL1 binds to the half-site 5'-GTGA-3'. The CLOCK-BMAL1 heterodimer also recognizes the non-canonical E-box motifs 5'-AACGTGA-3' and 5'-CATGTGA-3'. Essential for the rhythmic interaction of CLOCK with ASS1 and plays a critical role in positively regulating CLOCK-mediated acetylation of ASS1. Plays a role in protecting against lethal sepsis by limiting the expression of immune checkpoint protein CD274 in macrophages in a PKM2-dependent manner. Regulates the diurnal rhythms of skeletal muscle metabolism via transcriptional activation of genes promoting triglyceride synthesis (DGAT2) and metabolic efficiency (COQ10B). The chain is Basic helix-loop-helix ARNT-like protein 1 (BMAL1) from Pongo abelii (Sumatran orangutan).